A 690-amino-acid polypeptide reads, in one-letter code: NF-kappa-B-repressing factor (690 aa).

Residues M1–V296 form an active repression domain region. The short motif at K25–K45 is the Nuclear localization signal element. Disordered stretches follow at residues S27–T87 and M132–P163. Residue K68 forms a Glycyl lysine isopeptide (Lys-Gly) (interchain with G-Cter in SUMO2) linkage. Over residues S142–P163 the composition is skewed to low complexity. A DNA-binding region spans residues V296 to A388. Over residues P414 to R431 the composition is skewed to polar residues. Residues P414–K437 form a disordered region. Residue K500 forms a Glycyl lysine isopeptide (Lys-Gly) (interchain with G-Cter in SUMO2) linkage. A G-patch domain is found at E551–E596. An R3H domain is found at K600 to R664. Residue S618 is modified to Phosphoserine. Residues K666 and K674 each participate in a glycyl lysine isopeptide (Lys-Gly) (interchain with G-Cter in SUMO2) cross-link.

In terms of assembly, interacts with NF-kappa-B. Interacts with XRN2. Interacts (via G-patch domain) with DHX15; promoting the RNA helicase activity of DHX15. Widely and constitutively expressed. Expressed at lower level in colon, peripheral blood lymphocytes, lung and kidney.

The protein localises to the nucleus. It is found in the nucleolus. Enhances the ATPase activity of DHX15 by acting like a brace that tethers mobile sections of DHX15 together, stabilizing a functional conformation with high RNA affinity of DHX15. Involved in the constitutive silencing of the interferon beta promoter, independently of the virus-induced signals, and in the inhibition of the basal and cytokine-induced iNOS promoter activity. Also involved in the regulation of IL-8 transcription. May also act as a DNA-binding transcription regulator: interacts with a specific negative regulatory element (NRE) 5'-AATTCCTCTGA-3' to mediate transcriptional repression of certain NK-kappa-B responsive genes. This is NF-kappa-B-repressing factor from Homo sapiens (Human).